We begin with the raw amino-acid sequence, 433 residues long: Urokinase-type plasminogen activator (433 aa).

The signal sequence occupies residues 1 to 20; the sequence is MRALLAHLLLCVLVVSASKG. The region spanning 26–62 is the EGF-like domain; that stretch reads VPSDCGCLNGGTCMSNKYFSSIHWCNCPKKFGGQHCE. 6 disulfides stabilise this stretch: Cys30-Cys38, Cys32-Cys50, Cys52-Cys61, Cys69-Cys150, Cys90-Cys132, and Cys121-Cys145. The tract at residues 33–56 is binds urokinase plasminogen activator surface receptor; it reads LNGGTCMSNKYFSSIHWCNCPKKF. The Kringle domain occupies 69–150; the sequence is CYEGNGHFYR…RVQECMVHNC (82 aa). The segment at 151–177 is connecting peptide; that stretch reads ADGKKPSSPPEELQFQCGQRTLRPRFK. Phosphoserine is present on Ser157. 6 disulfide bridges follow: Cys167/Cys298, Cys208/Cys224, Cys216/Cys287, Cys315/Cys384, Cys347/Cys363, and Cys374/Cys402. The Peptidase S1 domain occupies 178-426; it reads IVGGEFTTIE…FLPWIHSHTR (249 aa). Active-site charge relay system residues include His223 and Asp274. N-linked (GlcNAc...) asparagine glycosylation occurs at Asn324. Ser325 carries the post-translational modification Phosphoserine. Ser378 (charge relay system) is an active-site residue.

The protein belongs to the peptidase S1 family. Found in high and low molecular mass forms. Each consists of two chains, A and B. The high molecular mass form contains a long chain A which is cleaved to yield a short chain A. Forms heterodimer with SERPINA5. Binds LRP1B; binding is followed by internalization and degradation. Interacts with MRC2. Interacts with PLAUR. In complex with SERPINE1, interacts with PLAUR/uPAR. Interacts with SORL1 and LRP1, either alone or in complex with SERPINE1; these interactions are abolished in the presence of LRPAP1/RAP. The ternary complex composed of PLAUR-PLAU-PAI1 also interacts with SORLA. In terms of processing, phosphorylation of Ser-157 and Ser-325 abolishes proadhesive ability but does not interfere with receptor binding. Post-translationally, produced as an inactive single-chain protein (pro-uPA or sc-uPA), is processed into the active disulfide-linked two-chain form of PLAU/uPA by a proteolytic event mediated, at least, by TMPRSS4.

Its subcellular location is the secreted. It carries out the reaction Specific cleavage of Arg-|-Val bond in plasminogen to form plasmin.. Inhibited by SERPINA5. Inhibited by SERPINE1. In terms of biological role, specifically cleaves the zymogen plasminogen to form the active enzyme plasmin. This is Urokinase-type plasminogen activator (PLAU) from Papio cynocephalus (Yellow baboon).